The following is a 256-amino-acid chain: Small ribosomal subunit protein uS2 (256 aa).

Belongs to the universal ribosomal protein uS2 family.

In Streptococcus equi subsp. equi (strain 4047), this protein is Small ribosomal subunit protein uS2.